An 83-amino-acid chain; its full sequence is Protein WFDC9 (83 aa).

The signal sequence occupies residues 1-24 (MKPWIIVLTVSAHGILVFLHVLGS).

The protein localises to the secreted. The chain is Protein WFDC9 (Wfdc9) from Mus musculus (Mouse).